The chain runs to 196 residues: MSRYRGPRLKKIRRLGALPGLTRKTPKSGSNQKKKFNSGKKEQYRIRLQEKQKLRFHYGLTERQLLRYVHIAGKAKRSTGQVLLQLLEMRLDNILFRLGMASTIPGARQLVNHRHILVNGRIVDIPSFRCKPRDIITTKDNQRSKRLVQNSIASSDPANLPKHLTVDTLQYKGLVKKILDRKWVGLKVNELLVVEY.

Positions 15–42 are disordered; the sequence is LGALPGLTRKTPKSGSNQKKKFNSGKKE. One can recognise an S4 RNA-binding domain in the interval 89–150; it reads MRLDNILFRL…NQRSKRLVQN (62 aa).

This sequence belongs to the universal ribosomal protein uS4 family. As to quaternary structure, part of the 30S ribosomal subunit. Contacts protein S5. The interaction surface between S4 and S5 is involved in control of translational fidelity.

The protein resides in the plastid. It localises to the chloroplast. In terms of biological role, one of the primary rRNA binding proteins, it binds directly to 16S rRNA where it nucleates assembly of the body of the 30S subunit. Its function is as follows. With S5 and S12 plays an important role in translational accuracy. The protein is Small ribosomal subunit protein uS4c (rps4) of Cenchrus longisetus (Feathertop).